The chain runs to 325 residues: Ribosomal RNA small subunit methyltransferase H (325 aa).

Residues 45 to 47, Asp-65, Tyr-92, Asp-113, and Gln-120 contribute to the S-adenosyl-L-methionine site; that span reads GGH.

It belongs to the methyltransferase superfamily. RsmH family.

Its subcellular location is the cytoplasm. The catalysed reaction is cytidine(1402) in 16S rRNA + S-adenosyl-L-methionine = N(4)-methylcytidine(1402) in 16S rRNA + S-adenosyl-L-homocysteine + H(+). Specifically methylates the N4 position of cytidine in position 1402 (C1402) of 16S rRNA. This chain is Ribosomal RNA small subunit methyltransferase H, found in Oleidesulfovibrio alaskensis (strain ATCC BAA-1058 / DSM 17464 / G20) (Desulfovibrio alaskensis).